We begin with the raw amino-acid sequence, 133 residues long: Profilin (133 aa).

The protein belongs to the profilin family.

More likely to influence phosphoinositide metabolism than actin assembly. The chain is Profilin from Camelus.